A 444-amino-acid polypeptide reads, in one-letter code: Chitinase-like protein Idgf1 (444 aa).

Residues 1–20 (MTSLLFVILNIILTLHLCAG) form the signal peptide. Positions 29–444 (KRLICYYDAQ…PILRSVRGHL (416 aa)) constitute a GH18 domain. Cysteines 33 and 60 form a disulfide. 3 N-linked (GlcNAc...) asparagine glycosylation sites follow: asparagine 213, asparagine 225, and asparagine 335. A disulfide bridge links cysteine 346 with cysteine 429.

Belongs to the glycosyl hydrolase 18 family. IDGF subfamily. In terms of processing, glycosylated.

Its subcellular location is the secreted. In terms of biological role, cooperates with insulin-like peptides to stimulate the proliferation, polarization and motility of imaginal disk cells. May act by stabilizing the binding of insulin-like peptides to its receptor through a simultaneous interaction with both molecules to form a multiprotein signaling complex. The sequence is that of Chitinase-like protein Idgf1 (Idgf1) from Glossina morsitans morsitans (Savannah tsetse fly).